The chain runs to 197 residues: MKLLDARKDHYRKLAHEQGFRSRAAYKLKELNQSYRIIGPGFYVLDLGCAPGGWTQMAIKLAGNQGKVMGIDLSYVEEIPGAEILRGDIEDENVVDDVMNYFERKVNAVICDLSPKVSGNWSVDHAKQISLNYDCTKIMDKVLAHKGNAVFKVFDGEYSMEFRDYVKKKFARINLTKPKASRKQSSELYYVCLGFIG.

Positions 52, 54, 72, 88, and 112 each coordinate S-adenosyl-L-methionine. K152 serves as the catalytic Proton acceptor.

The protein belongs to the class I-like SAM-binding methyltransferase superfamily. RNA methyltransferase RlmE family.

It localises to the cytoplasm. It carries out the reaction uridine(2552) in 23S rRNA + S-adenosyl-L-methionine = 2'-O-methyluridine(2552) in 23S rRNA + S-adenosyl-L-homocysteine + H(+). Specifically methylates the uridine in position 2552 of 23S rRNA at the 2'-O position of the ribose in the fully assembled 50S ribosomal subunit. The chain is Ribosomal RNA large subunit methyltransferase E from Nitrosopumilus maritimus (strain SCM1).